A 609-amino-acid chain; its full sequence is Tyrosine-protein kinase transforming protein Fes (609 aa).

Disordered regions lie at residues 1–20 (AARADGTMGFSSELCSPQGH) and 152–208 (RDSA…GGRT). One can recognise an F-BAR; degenerate domain in the interval 8-174 (MGFSSELCSP…SKDKDRDKAK (167 aa)). Basic and acidic residues-rich tracts occupy residues 160-175 (KYQEASKDKDRDKAKL) and 190-206 (QDDRHSTSSSEQEREGG). The 90-residue stretch at 247 to 336 (WYHGALPRAE…KSGIVLNRAV (90 aa)) folds into the SH2 domain. The 262-residue stretch at 348-609 (LVLGEQIGRG…ELQSIRKRHR (262 aa)) folds into the Protein kinase domain. Residues 354–362 (IGRGNFGEV) and Lys-377 each bind ATP. Asp-470 acts as the Proton acceptor in catalysis. The residue at position 500 (Tyr-500) is a Phosphotyrosine; by autocatalysis.

Belongs to the protein kinase superfamily. Tyr protein kinase family. Fes/fps subfamily.

It carries out the reaction L-tyrosyl-[protein] + ATP = O-phospho-L-tyrosyl-[protein] + ADP + H(+). The protein is Tyrosine-protein kinase transforming protein Fes (V-FES) of Felidae (cat family).